Here is a 209-residue protein sequence, read N- to C-terminus: Iron-sulfur cluster assembly 2 homolog, mitochondrial (209 aa).

The N-terminal 27 residues, 1–27, are a transit peptide targeting the mitochondrion; it reads MIRSIFKKNSSLPYFLKRSFITKPHSI. Fe cation is bound by residues Cys-134, Cys-199, and Cys-201.

The protein belongs to the HesB/IscA family. The cofactor is Fe cation.

It localises to the mitochondrion. In terms of biological role, involved in the maturation of mitochondrial 4Fe-4S proteins functioning late in the iron-sulfur cluster assembly pathway. May be involved in the binding of an intermediate of Fe/S cluster assembly. This Dictyostelium discoideum (Social amoeba) protein is Iron-sulfur cluster assembly 2 homolog, mitochondrial (isca2).